A 321-amino-acid chain; its full sequence is Porin Omp2a (321 aa).

The first 22 residues, M1–A22, serve as a signal peptide directing secretion.

This sequence belongs to the alphaproteobacteria porin family. In terms of assembly, monomer.

The protein localises to the cell outer membrane. In terms of biological role, forms passive diffusion pores that allow small molecular weight hydrophilic materials across the outer membrane. The chain is Porin Omp2a (omp2a) from Brucella abortus (strain S19).